Reading from the N-terminus, the 121-residue chain is Cu-Zn superoxide dismutase-like protein (121 aa).

The cysteines at positions 48 and 98 are disulfide-linked.

This sequence belongs to the Cu-Zn superoxide dismutase family.

It localises to the host cytoplasm. Its function is as follows. Virion protein with no enzymatic activity. This chain is Cu-Zn superoxide dismutase-like protein, found in Vaccinia virus (strain Ankara) (VACV).